A 64-amino-acid chain; its full sequence is MAAVCDICGKGPGFGKSVSHSHRRTSRRWDPNVQTVHMVTRPGGNKQQLKVCTSCIKAGKVTRG.

Belongs to the bacterial ribosomal protein bL28 family.

This Mycobacterium leprae (strain TN) protein is Large ribosomal subunit protein bL28 (rpmB).